Reading from the N-terminus, the 141-residue chain is Large ribosomal subunit protein uL11 (141 aa).

Belongs to the universal ribosomal protein uL11 family. As to quaternary structure, part of the ribosomal stalk of the 50S ribosomal subunit. Interacts with L10 and the large rRNA to form the base of the stalk. L10 forms an elongated spine to which L12 dimers bind in a sequential fashion forming a multimeric L10(L12)X complex. One or more lysine residues are methylated.

In terms of biological role, forms part of the ribosomal stalk which helps the ribosome interact with GTP-bound translation factors. The polypeptide is Large ribosomal subunit protein uL11 (Synechococcus elongatus (strain ATCC 33912 / PCC 7942 / FACHB-805) (Anacystis nidulans R2)).